The sequence spans 181 residues: Cyclic AMP-dependent transcription factor ATF-3 (181 aa).

Residue Lys78 forms a Glycyl lysine isopeptide (Lys-Gly) (interchain with G-Cter in SUMO2) linkage. One can recognise a bZIP domain in the interval 86 to 149; the sequence is DERKKRRRER…QHLIYMLNLH (64 aa). Residues 88–110 are basic motif; that stretch reads RKKRRRERNKIAAAKCRNKKKEK. The leucine-zipper stretch occupies residues 114–142; that stretch reads LQKESEKLESVNAELKAQIEELKNEKQHL. The residue at position 162 (Thr162) is a Phosphothreonine. A Glycyl lysine isopeptide (Lys-Gly) (interchain with G-Cter in SUMO2) cross-link involves residue Lys175.

Belongs to the bZIP family. ATF subfamily. In terms of assembly, binds DNA as a homodimer or a heterodimer. Interacts with KAT5; promoting KAT5 autoacetylation and KAT5 deubiquitination by USP7.

It is found in the nucleus. This protein binds the cAMP response element (CRE) (consensus: 5'-GTGACGT[AC][AG]-3'), a sequence present in many viral and cellular promoters. Represses transcription from promoters with ATF sites. It may repress transcription by stabilizing the binding of inhibitory cofactors at the promoter. Its function is as follows. Activates transcription presumably by sequestering inhibitory cofactors away from the promoters. In terms of biological role, stress-induced isoform, counteracts the transcriptional repression of isoform 1. The chain is Cyclic AMP-dependent transcription factor ATF-3 from Homo sapiens (Human).